Consider the following 92-residue polypeptide: LYR motif-containing protein 4 homolog (92 aa).

The stretch at 48 to 68 forms a coiled coil; it reads AEIDRQMAEGQQNLELIRRQV.

This sequence belongs to the complex I LYR family. As to quaternary structure, component of the mitochondrial core iron-sulfur cluster (ISC) assembly complex at least composed of the cysteine desulfurase Nfs1, the scaffold protein IscU, the accessory protein bcn92/Isd11/Lyrm4, and probably fh/frataxin. Interacts with Nfs1.

The protein localises to the mitochondrion. Stabilizing factor of the core iron-sulfur cluster (ISC) assembly complex that regulates the stability and cysteine desulfurase activity of Nfs1 and participates in the [2Fe-2S] clusters assembly on the scaffolding protein IscU. The sequence is that of LYR motif-containing protein 4 homolog from Drosophila melanogaster (Fruit fly).